Reading from the N-terminus, the 365-residue chain is Peptide chain release factor 1 (365 aa).

Glutamine 240 bears the N5-methylglutamine mark.

Belongs to the prokaryotic/mitochondrial release factor family. Post-translationally, methylated by PrmC. Methylation increases the termination efficiency of RF1.

Its subcellular location is the cytoplasm. Peptide chain release factor 1 directs the termination of translation in response to the peptide chain termination codons UAG and UAA. The polypeptide is Peptide chain release factor 1 (Bifidobacterium animalis subsp. lactis (strain AD011)).